The following is a 144-amino-acid chain: D-aminoacyl-tRNA deacylase (144 aa).

A Gly-cisPro motif, important for rejection of L-amino acids motif is present at residues 136 to 137 (GP).

It belongs to the DTD family. Homodimer.

The protein localises to the cytoplasm. The catalysed reaction is glycyl-tRNA(Ala) + H2O = tRNA(Ala) + glycine + H(+). It catalyses the reaction a D-aminoacyl-tRNA + H2O = a tRNA + a D-alpha-amino acid + H(+). Its function is as follows. An aminoacyl-tRNA editing enzyme that deacylates mischarged D-aminoacyl-tRNAs. Also deacylates mischarged glycyl-tRNA(Ala), protecting cells against glycine mischarging by AlaRS. Acts via tRNA-based rather than protein-based catalysis; rejects L-amino acids rather than detecting D-amino acids in the active site. By recycling D-aminoacyl-tRNA to D-amino acids and free tRNA molecules, this enzyme counteracts the toxicity associated with the formation of D-aminoacyl-tRNA entities in vivo and helps enforce protein L-homochirality. The chain is D-aminoacyl-tRNA deacylase from Haemophilus ducreyi (strain 35000HP / ATCC 700724).